The following is a 769-amino-acid chain: PDZ domain-containing protein 4 (769 aa).

The PDZ domain occupies 130–214 (EVELYKSSHR…TNISLLVARP (85 aa)). A disordered region spans residues 221–315 (RWKDSDRDDF…TNTPGSLRKF (95 aa)). Acidic residues predominate over residues 229–239 (DFLDDFGSENE). Phosphoserine is present on Ser-236. Over residues 282 to 298 (RTDESTRNEESSEHDLL) the composition is skewed to basic and acidic residues. A coiled-coil region spans residues 389–419 (VNRNESLGHEMAMLEEELRHLEFKCRNILRA). A disordered region spans residues 445 to 579 (ASEPKKHELS…RHRGQGQEGE (135 aa)). Residues 447 to 467 (EPKKHELSDISELPEKSDKDS) are compositionally biased toward basic and acidic residues. The residue at position 454 (Ser-454) is a Phosphoserine. A compositionally biased stretch (polar residues) spans 468–479 (TSAYNTGESCRS). Over residues 530 to 547 (LSRDPEAGRRQHAEERGR) the composition is skewed to basic and acidic residues.

Brain-specific. Expressed in fetal and adult brain. Up-regulated in synovial carcinomas.

The protein resides in the cytoplasm. It is found in the cell cortex. This is PDZ domain-containing protein 4 (PDZD4) from Homo sapiens (Human).